Reading from the N-terminus, the 101-residue chain is Apolipoprotein C-II (101 aa).

Positions 1 to 22 (MGTRYLLVLLLVLLVLGFEVQG) are cleaved as a signal peptide. The lipid binding stretch occupies residues 66 to 74 (TMDEKIRDI). The interval 78–101 (STAAVSTYAGIFTDQLLSMLKGDS) is lipoprotein lipase cofactor.

This sequence belongs to the apolipoprotein C2 family. Post-translationally, proapolipoprotein C-II is synthesized as a sialic acid containing glycoprotein which is subsequently desialylated prior to its proteolytic processing. In terms of processing, proapolipoprotein C-II, the major form found in plasma undergoes proteolytic cleavage of its N-terminal hexapeptide to generate apolipoprotein C-II, which occurs as the minor form in plasma. In terms of tissue distribution, highly expressed in the liver. Moderately expressed in the ileum, jejunum and ovary.

The protein localises to the secreted. Component of chylomicrons, very low-density lipoproteins (VLDL), low-density lipoproteins (LDL), and high-density lipoproteins (HDL) in plasma. Plays an important role in lipoprotein metabolism as an activator of lipoprotein lipase. Both proapolipoprotein C-II and apolipoprotein C-II can activate lipoprotein lipase. This chain is Apolipoprotein C-II (APOC2), found in Canis lupus familiaris (Dog).